The primary structure comprises 696 residues: DNA ligase (696 aa).

NAD(+)-binding positions include 55–59 (DYEFD), 105–106 (SL), and glutamate 137. The active-site N6-AMP-lysine intermediate is the lysine 139. 4 residues coordinate NAD(+): arginine 160, glutamate 194, lysine 310, and lysine 334. 4 residues coordinate Zn(2+): cysteine 428, cysteine 431, cysteine 446, and cysteine 451. One can recognise a BRCT domain in the interval 615-696 (NVNPNFVGKN…EFIELKDKFD (82 aa)).

Belongs to the NAD-dependent DNA ligase family. LigA subfamily. Mg(2+) serves as cofactor. Mn(2+) is required as a cofactor.

It catalyses the reaction NAD(+) + (deoxyribonucleotide)n-3'-hydroxyl + 5'-phospho-(deoxyribonucleotide)m = (deoxyribonucleotide)n+m + AMP + beta-nicotinamide D-nucleotide.. DNA ligase that catalyzes the formation of phosphodiester linkages between 5'-phosphoryl and 3'-hydroxyl groups in double-stranded DNA using NAD as a coenzyme and as the energy source for the reaction. It is essential for DNA replication and repair of damaged DNA. This chain is DNA ligase, found in Fusobacterium nucleatum subsp. nucleatum (strain ATCC 25586 / DSM 15643 / BCRC 10681 / CIP 101130 / JCM 8532 / KCTC 2640 / LMG 13131 / VPI 4355).